The sequence spans 194 residues: Cysteine and glycine-rich protein 2 (194 aa).

Residues 10–61 enclose the LIM zinc-binding 1 domain; that stretch reads CGACGRTVYHAEEVQCDGRSFHRCCFLCMVCRKNLDSTTVAIHDAEVYCKSC. A Nuclear localization signal motif is present at residues 64-69; it reads KKYGPK. A disordered region spans residues 85–110; sequence GERLGIKPESSPSPHRPTTNPNTSKF. Over residues 94–110 the composition is skewed to polar residues; it reads SSPSPHRPTTNPNTSKF. In terms of domain architecture, LIM zinc-binding 2 spans 120-171; that stretch reads CSRCGDSVYAAEKVIGAGKPWHKNCFRCAKCGKSLESTTLTEKEGEIYCKGC.

It is found in the nucleus. Functionally, interacts with zyxin. May be a component of a signal transduction pathway that mediates adhesion-stimulated changes in gene expression. Totally down-regulated in transformed cells. The chain is Cysteine and glycine-rich protein 2 (CSRP2) from Coturnix japonica (Japanese quail).